The primary structure comprises 63 residues: Overexpressed in colon carcinoma 1 protein homolog (63 aa).

Polar residues predominate over residues Met1–Ser10. The segment at Met1–Asn37 is disordered.

The protein belongs to the OCC1 family.

In Rattus norvegicus (Rat), this protein is Overexpressed in colon carcinoma 1 protein homolog.